A 546-amino-acid polypeptide reads, in one-letter code: Chaperonin GroEL (546 aa).

ATP is bound by residues 29-32 (TMGP), Lys50, 86-90 (DGTTT), Gly414, and Asp492.

Belongs to the chaperonin (HSP60) family. As to quaternary structure, forms a cylinder of 14 subunits composed of two heptameric rings stacked back-to-back. Interacts with the co-chaperonin GroES.

The protein resides in the cytoplasm. It catalyses the reaction ATP + H2O + a folded polypeptide = ADP + phosphate + an unfolded polypeptide.. In terms of biological role, together with its co-chaperonin GroES, plays an essential role in assisting protein folding. The GroEL-GroES system forms a nano-cage that allows encapsulation of the non-native substrate proteins and provides a physical environment optimized to promote and accelerate protein folding. In Helicobacter pylori (strain G27), this protein is Chaperonin GroEL.